Reading from the N-terminus, the 235-residue chain is UDP-2,3-diacylglucosamine hydrolase (235 aa).

Residues Asp-9, His-11, Asp-42, Asn-80, and His-115 each contribute to the Mn(2+) site. Residue 80 to 81 (NR) participates in substrate binding. Substrate contacts are provided by Asp-123, Ser-161, Lys-165, Lys-168, and His-196. Mn(2+) contacts are provided by His-196 and His-198.

It belongs to the LpxH family. Mn(2+) serves as cofactor.

It is found in the cell inner membrane. It catalyses the reaction UDP-2-N,3-O-bis[(3R)-3-hydroxytetradecanoyl]-alpha-D-glucosamine + H2O = 2-N,3-O-bis[(3R)-3-hydroxytetradecanoyl]-alpha-D-glucosaminyl 1-phosphate + UMP + 2 H(+). It functions in the pathway glycolipid biosynthesis; lipid IV(A) biosynthesis; lipid IV(A) from (3R)-3-hydroxytetradecanoyl-[acyl-carrier-protein] and UDP-N-acetyl-alpha-D-glucosamine: step 4/6. In terms of biological role, hydrolyzes the pyrophosphate bond of UDP-2,3-diacylglucosamine to yield 2,3-diacylglucosamine 1-phosphate (lipid X) and UMP by catalyzing the attack of water at the alpha-P atom. Involved in the biosynthesis of lipid A, a phosphorylated glycolipid that anchors the lipopolysaccharide to the outer membrane of the cell. This chain is UDP-2,3-diacylglucosamine hydrolase, found in Actinobacillus succinogenes (strain ATCC 55618 / DSM 22257 / CCUG 43843 / 130Z).